The primary structure comprises 220 residues: Urease accessory protein UreG (220 aa).

GTP is bound at residue 18 to 25 (GPVGSGKT).

The protein belongs to the SIMIBI class G3E GTPase family. UreG subfamily. Homodimer. UreD, UreF and UreG form a complex that acts as a GTP-hydrolysis-dependent molecular chaperone, activating the urease apoprotein by helping to assemble the nickel containing metallocenter of UreC. The UreE protein probably delivers the nickel.

It localises to the cytoplasm. In terms of biological role, facilitates the functional incorporation of the urease nickel metallocenter. This process requires GTP hydrolysis, probably effectuated by UreG. The polypeptide is Urease accessory protein UreG (Yersinia pestis).